We begin with the raw amino-acid sequence, 94 residues long: Large ribosomal subunit protein uL23c (94 aa).

It belongs to the universal ribosomal protein uL23 family. Part of the 50S ribosomal subunit.

The protein resides in the plastid. The protein localises to the chloroplast. In terms of biological role, binds to 23S rRNA. This Tupiella akineta (Green alga) protein is Large ribosomal subunit protein uL23c (rpl23).